The chain runs to 273 residues: MSADALKDVIGGGKDLYALLEVSISSPEELEAVDAAQLRAQFRRLALRYHPDKRRDDTQQNDKFVSVQKAYDILSNSSLRATYNRWLSCRLFGDPERRRLVRELHQREQLQVRQKEPMDKDIQNIQSYGQLLRKMRHLRIPYGDWRPNTSISRDSTLVETCTLRLLLRQNSTTNSKSSMLQLFQRAKLHIVDLYFSSRNVDTENDLVLYAVMPDVDTMLDLLNNWAVKPPLSEHILQVQPRVHTDYFHFKTDISLDKTITEAIDADNQYMSSF.

Residues 15–87 (DLYALLEVSI…SLRATYNRWL (73 aa)) form the J domain.

This sequence belongs to the DnaJ family. In terms of assembly, associated with the spliceosome.

The protein resides in the cytoplasm. It localises to the nucleus. Its function is as follows. Involved in pre-mRNA splicing. May be involved in endoplasmic reticulum-associated protein degradation (ERAD) and required for growth at low and high temperatures. The protein is Pre-mRNA-splicing factor CWC23 (CWC23) of Eremothecium gossypii (strain ATCC 10895 / CBS 109.51 / FGSC 9923 / NRRL Y-1056) (Yeast).